Consider the following 549-residue polypeptide: MELLLPHPSNSTPLTVLGFLDRAASVYGDCPSILHTANTVHTWSETHNRCLRIASALTSSSIGIKQGQVVSVVGPNVPSVYELQFAVPMSGAILNNINPRLDAHALSVLLRHSESRLVFVDHRSISLVLEAVSLFTQHEKPHLVLLDDDQENDSSSASDFLDTYEEIMERGNSRFKWIRPQTEWQPMVLNYTSGTTSSPKGVVLSHRAIFMLTVSSLLDWSVPNRPVYLWTLPMFHANGWGYTWGTAAVGATNICTRRVDAPTIYNLIDKHNVTHMCAAPMVLNMLINYPLSTPLKNPVQVMTSGAPPPATIISRAESLGFNVSHSYGLTETSGPVVSCAWKPKWDHLDPLERARLKSRQGVRTLGFTEVDVRDRKTGKSVKHDGVSVGEIVFRGSSVMLGYYKDPQGTAACMREDGWFYSGDIGVIHKDGYLEIKDRSKDVIICGGENISSAEIETVLYTNPVVKEAAVVAKPDKMWGETPCAFVSLKCDNNGDGSVPVTEREIREFCKTKLPKYMVPRKVIFQEELPKTSTGKIQKFLLRQMAKTLS.

This sequence belongs to the ATP-dependent AMP-binding enzyme family. In terms of tissue distribution, expressed at low levels in roots.

Its function is as follows. May act as an acid--thiol ligase that activates carboxylic acids by forming acyl-CoAs. This chain is Probable acyl-activating enzyme 10 (AEE10), found in Arabidopsis thaliana (Mouse-ear cress).